The primary structure comprises 132 residues: Methylglyoxal synthase (132 aa).

Positions 1-132 (MNIALIAHDQ…LLEWREIEDK (132 aa)) constitute an MGS-like domain. 2 residues coordinate substrate: His-8 and Lys-12. Asp-60 serves as the catalytic Proton donor/acceptor. His-87 is a substrate binding site.

It belongs to the methylglyoxal synthase family.

It catalyses the reaction dihydroxyacetone phosphate = methylglyoxal + phosphate. Its function is as follows. Catalyzes the formation of methylglyoxal from dihydroxyacetone phosphate. This chain is Methylglyoxal synthase, found in Thermoanaerobacter pseudethanolicus (strain ATCC 33223 / 39E) (Clostridium thermohydrosulfuricum).